The primary structure comprises 501 residues: Glycogenin-2 (501 aa).

Leucine 42, threonine 44, asparagine 45, tyrosine 48, and arginine 110 together coordinate UDP. Positions 42, 44, 45, 48, 110, 119, 135, 136, 137, 166, 167, 193, 196, and 197 each coordinate UDP-alpha-D-glucose. UDP contacts are provided by aspartate 135, alanine 136, and aspartate 137. Residue aspartate 135 coordinates Mn(2+). Aspartate 137 is a Mn(2+) binding site. A glycan (O-linked (Glc...) tyrosine) is linked at tyrosine 228. Residues histidine 245, glycine 248, and lysine 251 each coordinate UDP. Residue histidine 245 coordinates Mn(2+). 2 residues coordinate UDP-alpha-D-glucose: glycine 248 and lysine 251. A phosphoserine mark is found at serine 368, serine 399, and serine 459.

Homodimer, tightly complexed to glycogen synthase. Requires Mn(2+) as cofactor. Post-translationally, self-glycosylated by the transfer of glucose residues from UDP-glucose to itself, forming an alpha-1,4-glycan of around 10 residues attached to Tyr-228. As to expression, detected in liver (at protein level). Expressed preferentially in liver, heart, and pancreas.

Its subcellular location is the cytoplasm. It is found in the nucleus. It catalyses the reaction L-tyrosyl-[glycogenin] + UDP-alpha-D-glucose = alpha-D-glucosyl-L-tyrosyl-[glycogenin] + UDP + H(+). It carries out the reaction [1,4-alpha-D-glucosyl](n)-L-tyrosyl-[glycogenin] + UDP-alpha-D-glucose = [1,4-alpha-D-glucosyl](n+1)-L-tyrosyl-[glycogenin] + UDP + H(+). It functions in the pathway glycan biosynthesis; glycogen biosynthesis. Its function is as follows. Glycogenin participates in the glycogen biosynthetic process along with glycogen synthase and glycogen branching enzyme. It catalyzes the formation of a short alpha (1,4)-glucosyl chain covalently attached via a glucose 1-O-tyrosyl linkage to internal tyrosine residues and these chains act as primers for the elongation reaction catalyzed by glycogen synthase. In Homo sapiens (Human), this protein is Glycogenin-2 (GYG2).